The chain runs to 299 residues: Type II restriction enzyme BglI (299 aa).

Mg(2+)-binding residues include aspartate 116, aspartate 142, and isoleucine 143.

In terms of assembly, homodimer. Mg(2+) serves as cofactor.

It catalyses the reaction Endonucleolytic cleavage of DNA to give specific double-stranded fragments with terminal 5'-phosphates.. Its function is as follows. A P subtype restriction enzyme that recognizes the double-stranded sequence 5'-GCCNNNNNGGC-3' and cleaves before N-8. The protein is Type II restriction enzyme BglI (bglIR) of Bacillus subtilis.